The chain runs to 56 residues: Ribosome modulation factor (56 aa).

The protein belongs to the ribosome modulation factor family.

It is found in the cytoplasm. Functionally, during stationary phase, converts 70S ribosomes to an inactive dimeric form (100S ribosomes). This chain is Ribosome modulation factor, found in Proteus mirabilis (strain HI4320).